Reading from the N-terminus, the 128-residue chain is Large ribosomal subunit protein bL12 (128 aa).

This sequence belongs to the bacterial ribosomal protein bL12 family. As to quaternary structure, homodimer. Part of the ribosomal stalk of the 50S ribosomal subunit. Forms a multimeric L10(L12)X complex, where L10 forms an elongated spine to which 2 to 4 L12 dimers bind in a sequential fashion. Binds GTP-bound translation factors.

In terms of biological role, forms part of the ribosomal stalk which helps the ribosome interact with GTP-bound translation factors. Is thus essential for accurate translation. The protein is Large ribosomal subunit protein bL12 of Trichormus variabilis (strain ATCC 29413 / PCC 7937) (Anabaena variabilis).